A 697-amino-acid polypeptide reads, in one-letter code: T-related protein (697 aa).

The interval 1–60 (MTTSHILSAVDPTTGLSGNVSGGGGGGGAGGGAGSGSPQHVTHNGHGHGHGLGGVAAVSG) is disordered. 2 stretches are compositionally biased toward gly residues: residues 20-35 (VSGGGGGGGAGGGAGS) and 50-60 (HGLGGVAAVSG). Positions 96-264 (LWLRFQNLTN…YNPFAKAFLD (169 aa)) form a DNA-binding region, T-box. The span at 316-330 (SVSSAESVGPSSGGS) shows a compositional bias: low complexity. Disordered stretches follow at residues 316-407 (SVSS…GGIG) and 462-488 (VCSGRNISSHNSPSPTNGSPSYTTSSP). The span at 337–351 (SLSSRSVAPTRTTPY) shows a compositional bias: polar residues. Low complexity-rich tracts occupy residues 352–373 (SRPRVVSGSGSNGSAGNASSTS), 381–401 (QTPTSLHSTSTGSVSTSVSSS), and 469–488 (SSHNSPSPTNGSPSYTTSSP).

The protein localises to the nucleus. Functionally, required for the specification of the hindgut and anal pads. This Drosophila melanogaster (Fruit fly) protein is T-related protein (byn).